We begin with the raw amino-acid sequence, 174 residues long: Peptide methionine sulfoxide reductase MsrA (174 aa).

The active site involves Cys-11.

The protein belongs to the MsrA Met sulfoxide reductase family.

It catalyses the reaction L-methionyl-[protein] + [thioredoxin]-disulfide + H2O = L-methionyl-(S)-S-oxide-[protein] + [thioredoxin]-dithiol. The enzyme catalyses [thioredoxin]-disulfide + L-methionine + H2O = L-methionine (S)-S-oxide + [thioredoxin]-dithiol. Functionally, has an important function as a repair enzyme for proteins that have been inactivated by oxidation. Catalyzes the reversible oxidation-reduction of methionine sulfoxide in proteins to methionine. The chain is Peptide methionine sulfoxide reductase MsrA from Nitratiruptor sp. (strain SB155-2).